The following is a 511-amino-acid chain: MTRKIDIFDTTLRDGEQSPGASMNTEEKLIVAQQLLRMHVDVIEAGFPISSPGDFRSVQEIGRLAGDDAVVVGLTRAVDKDIDRAAEALSCAKRPRIHTGLGVSPQHLADKLRISEDECVERAIRCVRYAKRYVEDVQFYAEDAGRADQGFLERVIQAVIEAGATVVNIPDTTGYQMPAAFGARIKGLCDNVRGIENVTIAVHTHNDLGMATALALAGVENGATQIECTINGLGERAGNTALEEVVMALRMHGDELDGHTDVVTQELTRASRLVSRITGMQVQANKAIVGANAFAHSSGIHQDGVLKSRGTYEIIDPADVGAAGSEIILSARSGHAALRHRLSELGYSFPESEFDDVYQRFLEIADQKKEVFDEDLESMVQERQRDVTAIYALESVQVVCGDAAIPTATVHITDEVGGEHVVACTGTGPVDAAYKAIDKVVSVHGDLQEFAVKAITRGIDAIGEVTVRIVAGDGRLYTGRGSDTDIVVSSAKAYVNAINRMIQTTRSKQGK.

A compositionally biased stretch (basic and acidic residues) spans 1–16 (MTRKIDIFDTTLRDGE). A disordered region spans residues 1–23 (MTRKIDIFDTTLRDGEQSPGASM). Positions 5-268 (IDIFDTTLRD…HTDVVTQELT (264 aa)) constitute a Pyruvate carboxyltransferase domain. Positions 14, 203, 205, and 239 each coordinate Mn(2+). The regulatory domain stretch occupies residues 392–511 (ALESVQVVCG…IQTTRSKQGK (120 aa)).

Belongs to the alpha-IPM synthase/homocitrate synthase family. LeuA type 1 subfamily. In terms of assembly, homodimer. Mn(2+) is required as a cofactor.

The protein resides in the cytoplasm. It carries out the reaction 3-methyl-2-oxobutanoate + acetyl-CoA + H2O = (2S)-2-isopropylmalate + CoA + H(+). Its pathway is amino-acid biosynthesis; L-leucine biosynthesis; L-leucine from 3-methyl-2-oxobutanoate: step 1/4. Functionally, catalyzes the condensation of the acetyl group of acetyl-CoA with 3-methyl-2-oxobutanoate (2-ketoisovalerate) to form 3-carboxy-3-hydroxy-4-methylpentanoate (2-isopropylmalate). This is 2-isopropylmalate synthase from Olsenella uli (strain ATCC 49627 / DSM 7084 / CCUG 31166 / CIP 109912 / JCM 12494 / LMG 11480 / NCIMB 702895 / VPI D76D-27C) (Lactobacillus uli).